A 732-amino-acid polypeptide reads, in one-letter code: Probable zinc transporter cis4 (732 aa).

A run of 12 helical transmembrane segments spans residues 52 to 72 (ETLGWFSVICAFSITGSGLEV), 79 to 99 (FYLIFGIFAFVSFTTQYLGIY), 111 to 131 (VIIASLSMVFITLGAFVLGTL), 163 to 183 (YIAFPICLFVINHILILLGYF), 189 to 209 (VFYASVFYILLGVFIRVFYLV), 219 to 239 (LAFLFSSIVVACLIQFNVLPL), 240 to 260 (GTINLSVTRFTILCFMQIFCI), 268 to 288 (IQFYLGKFDISLIMALISAII), 350 to 370 (IFYFFLLNVSYMFVQVIYGLW), 380 to 400 (AIHMAFDCIAILVGLVATTLA), 415 to 435 (IEALSGFTNGIFLVLISFSIV), and 453 to 473 (LLLVSFLGLVVNLVGILAFNH). The interval 526–547 (HVSQHEHTHENSQEHHHEHNHN) is disordered. A run of 2 helical transmembrane segments spans residues 586 to 606 (IFLHIIADTMGSVGVIVSTIL) and 615 to 635 (FDPLASLIIAALIFVSVLPLI).

Belongs to the cation diffusion facilitator (CDF) transporter (TC 2.A.4) family. SLC30A subfamily. As to quaternary structure, interacts with zrg17.

Its subcellular location is the endoplasmic reticulum membrane. It localises to the golgi apparatus. It is found in the cis-Golgi network membrane. Functionally, probable zinc transporter involved in Golgi membrane trafficking through the regulation of zinc homeostasis. The protein is Probable zinc transporter cis4 (cis4) of Schizosaccharomyces pombe (strain 972 / ATCC 24843) (Fission yeast).